We begin with the raw amino-acid sequence, 56 residues long: Prokaryotic ubiquitin-like protein UBact (56 aa).

The tract at residues 1-56 (MPERIVKPMPQDPVTKPGDEGPRTPNVPKPDTERLLERMRRVDPRQAQRYRQRSGE) is disordered. Residues 30–46 (PDTERLLERMRRVDPRQ) are compositionally biased toward basic and acidic residues. An Isoglutamyl lysine isopeptide (Glu-Lys) (interchain with K-? in acceptor proteins) cross-link involves residue Glu-56.

Belongs to the ubiquitin-like protein UBact family.

Functionally, may function as a protein modifier covalently attached to lysine residues of substrate proteins. This may serve to target the modified proteins for degradation by proteasomes. In Acetithermum autotrophicum, this protein is Prokaryotic ubiquitin-like protein UBact.